The following is a 100-amino-acid chain: Large ribosomal subunit protein uL23 (100 aa).

Belongs to the universal ribosomal protein uL23 family. Part of the 50S ribosomal subunit. Contacts protein L29, and trigger factor when it is bound to the ribosome.

Functionally, one of the early assembly proteins it binds 23S rRNA. One of the proteins that surrounds the polypeptide exit tunnel on the outside of the ribosome. Forms the main docking site for trigger factor binding to the ribosome. This Mycolicibacterium smegmatis (strain ATCC 700084 / mc(2)155) (Mycobacterium smegmatis) protein is Large ribosomal subunit protein uL23.